Consider the following 127-residue polypeptide: Fluoride-specific ion channel FluC (127 aa).

The next 4 helical transmembrane spans lie at 4–24 (LDYL…YLVS), 39–59 (GTII…FAAI), 68–88 (AILF…TFTY), and 102–122 (VAYA…GMIL). Na(+) is bound by residues G78 and T81.

The protein belongs to the fluoride channel Fluc/FEX (TC 1.A.43) family.

The protein resides in the cell inner membrane. The enzyme catalyses fluoride(in) = fluoride(out). Na(+) is not transported, but it plays an essential structural role and its presence is essential for fluoride channel function. Functionally, fluoride-specific ion channel. Important for reducing fluoride concentration in the cell, thus reducing its toxicity. The chain is Fluoride-specific ion channel FluC from Thermotoga maritima (strain ATCC 43589 / DSM 3109 / JCM 10099 / NBRC 100826 / MSB8).